The sequence spans 266 residues: GTP cyclohydrolase III (266 aa).

The protein belongs to the archaeal-type GTP cyclohydrolase family.

It carries out the reaction GTP + 3 H2O = 2-amino-5-formylamino-6-(5-phospho-D-ribosylamino)pyrimidin-4(3H)-one + 2 phosphate + 2 H(+). Catalyzes the formation of 2-amino-5-formylamino-6-ribofuranosylamino-4(3H)-pyrimidinone ribonucleotide monophosphate and inorganic phosphate from GTP. Also has an independent pyrophosphate phosphohydrolase activity. The sequence is that of GTP cyclohydrolase III from Methanococcus maripaludis (strain C7 / ATCC BAA-1331).